Here is a 697-residue protein sequence, read N- to C-terminus: Polyribonucleotide nucleotidyltransferase (697 aa).

Positions 490 and 496 each coordinate Mg(2+). The KH domain maps to 557-616 (PKVVTMTIKPEKIRDVIGPGGKKINEIIDETGVKLDIEQDGTIFIGAVDKDAIARARSII). Positions 626–694 (GQVYEGKVKR…KQGRVNASHK (69 aa)) constitute an S1 motif domain.

The protein belongs to the polyribonucleotide nucleotidyltransferase family. Requires Mg(2+) as cofactor.

It is found in the cytoplasm. It catalyses the reaction RNA(n+1) + phosphate = RNA(n) + a ribonucleoside 5'-diphosphate. Involved in mRNA degradation. Catalyzes the phosphorolysis of single-stranded polyribonucleotides processively in the 3'- to 5'-direction. The chain is Polyribonucleotide nucleotidyltransferase from Staphylococcus saprophyticus subsp. saprophyticus (strain ATCC 15305 / DSM 20229 / NCIMB 8711 / NCTC 7292 / S-41).